We begin with the raw amino-acid sequence, 727 residues long: Prolyl endopeptidase-like (727 aa).

Catalysis depends on charge relay system residues Ser-559, Asp-645, and His-690.

The protein belongs to the peptidase S9A family. As to quaternary structure, homodimer. Interacts with the AP-1 complex.

It is found in the cytoplasm. The protein resides in the cytosol. It localises to the golgi apparatus. Its subcellular location is the trans-Golgi network. The protein localises to the cytoskeleton. It is found in the nucleus. In terms of biological role, serine peptidase whose precise substrate specificity remains unclear. Does not cleave peptides after a arginine or lysine residue. Regulates trans-Golgi network morphology and sorting by regulating the membrane binding of the AP-1 complex. May play a role in the regulation of synaptic vesicle exocytosis. This is Prolyl endopeptidase-like (PREPL) from Pongo abelii (Sumatran orangutan).